An 88-amino-acid chain; its full sequence is Small ribosomal subunit protein bS16 (88 aa).

This sequence belongs to the bacterial ribosomal protein bS16 family.

The sequence is that of Small ribosomal subunit protein bS16 from Mesomycoplasma hyopneumoniae (strain 232) (Mycoplasma hyopneumoniae).